The sequence spans 312 residues: Methionyl-tRNA formyltransferase (312 aa).

109–112 (SLLP) is a (6S)-5,6,7,8-tetrahydrofolate binding site.

The protein belongs to the Fmt family.

The enzyme catalyses L-methionyl-tRNA(fMet) + (6R)-10-formyltetrahydrofolate = N-formyl-L-methionyl-tRNA(fMet) + (6S)-5,6,7,8-tetrahydrofolate + H(+). In terms of biological role, attaches a formyl group to the free amino group of methionyl-tRNA(fMet). The formyl group appears to play a dual role in the initiator identity of N-formylmethionyl-tRNA by promoting its recognition by IF2 and preventing the misappropriation of this tRNA by the elongation apparatus. The protein is Methionyl-tRNA formyltransferase of Listeria monocytogenes serotype 4b (strain CLIP80459).